The following is a 168-amino-acid chain: Crossover junction endodeoxyribonuclease RuvC (168 aa).

Active-site residues include aspartate 10, glutamate 70, and aspartate 143. Residues aspartate 10, glutamate 70, and aspartate 143 each contribute to the Mg(2+) site.

The protein belongs to the RuvC family. As to quaternary structure, homodimer which binds Holliday junction (HJ) DNA. The HJ becomes 2-fold symmetrical on binding to RuvC with unstacked arms; it has a different conformation from HJ DNA in complex with RuvA. In the full resolvosome a probable DNA-RuvA(4)-RuvB(12)-RuvC(2) complex forms which resolves the HJ. Mg(2+) is required as a cofactor.

It localises to the cytoplasm. The enzyme catalyses Endonucleolytic cleavage at a junction such as a reciprocal single-stranded crossover between two homologous DNA duplexes (Holliday junction).. The RuvA-RuvB-RuvC complex processes Holliday junction (HJ) DNA during genetic recombination and DNA repair. Endonuclease that resolves HJ intermediates. Cleaves cruciform DNA by making single-stranded nicks across the HJ at symmetrical positions within the homologous arms, yielding a 5'-phosphate and a 3'-hydroxyl group; requires a central core of homology in the junction. The consensus cleavage sequence is 5'-(A/T)TT(C/G)-3'. Cleavage occurs on the 3'-side of the TT dinucleotide at the point of strand exchange. HJ branch migration catalyzed by RuvA-RuvB allows RuvC to scan DNA until it finds its consensus sequence, where it cleaves and resolves the cruciform DNA. The sequence is that of Crossover junction endodeoxyribonuclease RuvC from Roseiflexus sp. (strain RS-1).